Reading from the N-terminus, the 207-residue chain is Hydrogenase expression/formation protein HoxM (207 aa).

Ni(2+) is bound by residues E19, D65, and H96.

It belongs to the peptidase A31 family.

Not known. Could be involved in the processing of hydrogenase. This Azotobacter vinelandii protein is Hydrogenase expression/formation protein HoxM (hoxM).